Reading from the N-terminus, the 222-residue chain is Glutathione S-transferase 3 (222 aa).

A GST N-terminal domain is found at 2–83 (APLKLYGMPL…YIASKYASEG (82 aa)). Glutathione-binding positions include Ser-12, 13-14 (PN), 41-42 (HK), 54-55 (QI), and 67-68 (ES). The GST C-terminal domain maps to 89-219 (ATASAAKLEV…AAIPLPPPPS (131 aa)).

It belongs to the GST superfamily. Phi family. As to quaternary structure, homodimer.

It carries out the reaction RX + glutathione = an S-substituted glutathione + a halide anion + H(+). Its function is as follows. Conjugation of reduced glutathione to a wide number of exogenous and endogenous hydrophobic electrophiles. Involved in the detoxification of certain herbicides. The sequence is that of Glutathione S-transferase 3 from Zea mays (Maize).